The chain runs to 687 residues: A-kinase anchor protein 8 (687 aa).

Residues 1–195 (MEQGYGGYGA…FLRGRGQGRF (195 aa)) are interaction with MCM2. The tract at residues 1-210 (MEQGYGGYGA…SSTFIRSDPF (210 aa)) is interaction with DPY30. At Ser-72 the chain carries Phosphoserine. Disordered stretches follow at residues 105 to 124 (KEGG…DRDS) and 185 to 218 (GFLR…ASEP). Arg-109 is subject to Asymmetric dimethylarginine; alternate. Arg-109 carries the omega-N-methylarginine; alternate modification. Positions 109–118 (RGGISSGGEG) are enriched in gly residues. An interaction with DDX5 region spans residues 109–201 (RGGISSGGEG…QGRFQDRSNS (93 aa)). At Ser-199 the chain carries Phosphoserine. Omega-N-methylarginine is present on residues Arg-232 and Arg-276. The interval 277 to 379 (SQTRIRDWPR…KQRRRDRMRD (103 aa)) is disordered. Composition is skewed to basic and acidic residues over residues 280–294 (RIRD…ERFG) and 311–320 (PDAKLARADS). The Bipartite nuclear localization signal motif lies at 286–303 (RRRGFERFGPDNMGRKRK). Lys-314 is covalently cross-linked (Glycyl lysine isopeptide (Lys-Gly) (interchain with G-Cter in SUMO2)). 3 positions are modified to phosphoserine: Ser-320, Ser-325, and Ser-336. The segment covering 321–331 (DGDLSENDDGA) has biased composition (acidic residues). Residues 335–357 (RSGDEEFRGEDDLCDSRKQRGEK) show a composition bias toward basic and acidic residues. Residues 384–447 (RIQFACSVCK…NKKIEKRRQE (64 aa)) form an involved in chromatin-binding region. 2 consecutive C2H2 AKAP95-type zinc fingers follow at residues 389-411 (CSVC…SKFH) and 478-501 (CLAC…SVDH). The segment at 522 to 565 (SVLNNKHIVKMLEKYLKGEDPFVNETADLETEGDENVGEEKEET) is involved in condensin complex recruitment. Position 552 is a phosphothreonine (Thr-552). Residues 568–585 (EVAAEVLAEVITAAVKAV) form an RII-binding region. Positions 572 to 589 (EVLAEVITAAVKAVEGEG) are required for interaction with MYCBP. The disordered stretch occupies residues 624 to 659 (QTCEAASETRSIEDKTRGEAAEARNEAAMPTADAGS). Basic and acidic residues predominate over residues 633 to 648 (RSIEDKTRGEAAEARN). Position 659 is a phosphoserine (Ser-659).

It belongs to the AKAP95 family. As to quaternary structure, binds to the PKA RII-alpha regulatory subunit PRKAR2A. Interacts (via C-terminus) with FIGN. Interacts with NCAPD2, CCND3, CCNE1, MCM2, RPS6KA1, DDX5, PDE4A. Interacts with MYCBP; MYCBP is translocated to the nucleus and the interaction prevents the association of the PKA catalytic subunit leading to suppression of PKA activity. Interacts with CCND1, CASP3. Interacts with NFKB1; detetcted in the cytoplasm. Interacts with DPY30; mediating AKAP8 association with at least the MLL4/WBP7 HMT complex. Interacts with HDAC3; increased during mitosis. Interacts with GJA1; in the nucleus and in the nuclear membrane; the nuclear association increases with progress of cell cycle G1, S and G2 phase and decreases in M phase. Post-translationally, phosphorylated on tyrosine residues probably by SRC subfamily protein kinases; multiple phosphorylation is leading to dissociation from nuclear structures implicated in chromatin structural changes.

It localises to the nucleus matrix. The protein resides in the nucleus. The protein localises to the nucleolus. It is found in the cytoplasm. Its function is as follows. Anchoring protein that mediates the subcellular compartmentation of cAMP-dependent protein kinase (PKA type II). Acts as an anchor for a PKA-signaling complex onto mitotic chromosomes, which is required for maintenance of chromosomes in a condensed form throughout mitosis. Recruits condensin complex subunit NCAPD2 to chromosomes required for chromatin condensation; the function appears to be independent from PKA-anchoring. Specifically involved in recruitment of CAPD2 to, and condensation of maternal but not paternal chromosomes. May help to deliver cyclin D/E to CDK4 to facilitate cell cycle progression. Required for cell cycle G2/M transition and histone deacetylation during mitosis. In mitotic cells recruits HDAC3 to the vicinity of chromatin leading to deacetylation and subsequent phosphorylation at 'Ser-10' of histone H3; in this function may act redundantly with AKAP8L. Involved in nuclear retention of RPS6KA1 upon ERK activation thus inducing cell proliferation. May be involved in regulation of DNA replication by acting as scaffold for MCM2. Enhances HMT activity of the KMT2 family MLL4/WBP7 complex and is involved in transcriptional regulation. In a teratocarcinoma cell line is involved in retinoic acid-mediated induction of developmental genes implicating H3 'Lys-4' methylation. May be involved in recruitment of active CASP3 to the nucleus in apoptotic cells. May act as a carrier protein of GJA1 for its transport to the nucleus. May play a repressive role in the regulation of rDNA transcription. Preferentially binds GC-rich DNA in vitro. In cells, associates with ribosomal RNA (rRNA) chromatin, preferentially with rRNA promoter and transcribed regions. Involved in modulation of Toll-like receptor signaling. Required for the cAMP-dependent suppression of TNF-alpha in early stages of LPS-induced macrophage activation; the function probably implicates targeting of PKA to NFKB1. In Mus musculus (Mouse), this protein is A-kinase anchor protein 8 (Akap8).